Consider the following 155-residue polypeptide: MGVSPVRDSWLVDEASDELISSERKLIAVECHDDDSQVINVKVEDICKDLSDKVVLKLQFRLCYKYRKLLDITLLGCRMKVYTQLKNTSLNSLKSLLQKRMNNICNDNYAIGIRMFFVNINQFIKSCKWIVSTEDVYPICTLYHMRDSDVFNVIK.

This sequence belongs to the nanovirus U1 protein family.

The protein is Protein U1 (DNA-U1) of Cicer arietinum (Chickpea).